Reading from the N-terminus, the 358-residue chain is SPbeta prophage-derived probable integrase/recombinase YopP (358 aa).

The region spanning 23 to 114 is the Core-binding (CB) domain; that stretch reads NKDIRSSSGN…SLKMLYTYLE (92 aa). Residues 137–319 form the Tyr recombinase domain; that stretch reads KNWDKTTQTE…NIANSAGVTM (183 aa). Active-site residues include arginine 178, lysine 206, histidine 268, and histidine 295. The active-site O-(3'-phospho-DNA)-tyrosine intermediate is the tyrosine 304.

Belongs to the 'phage' integrase family.

Functionally, probable recombinase that does not seem to have a role in chromosome dimer resolution per se but rather may have some facilitative role during chromosome partitioning in general. In Bacillus subtilis (strain 168), this protein is SPbeta prophage-derived probable integrase/recombinase YopP (yopP).